The following is a 413-amino-acid chain: Multidrug resistance protein MdtA (413 aa).

The signal sequence occupies residues 1–20 (MKGSNTFRWAIAIGVVVAAA). 2 disordered regions span residues 31–57 (SPTA…RDGP) and 391–413 (EPQT…GARA). Residues 397-413 (ADEKSPSRHEGQKGARA) show a composition bias toward basic and acidic residues.

This sequence belongs to the membrane fusion protein (MFP) (TC 8.A.1) family. In terms of assembly, part of a tripartite efflux system composed of MdtA, MdtB and MdtC.

It is found in the cell inner membrane. The chain is Multidrug resistance protein MdtA from Salmonella paratyphi C (strain RKS4594).